Reading from the N-terminus, the 775-residue chain is GRIP and coiled-coil domain-containing protein 1 (775 aa).

Positions 13-61 form a coiled coil; that stretch reads SKKDLLETIETQKKQLLQYQARLKDVVRAYKSLLKEKEALEASIKVLSV. Over residues 84-93 the composition is skewed to basic and acidic residues; sequence DDRCSTHSED. Disordered stretches follow at residues 84 to 153 and 614 to 639; these read DDRC…AGGE and GLPGRRSPVGGGGPGDPADTSSSDSL. 3 stretches are compositionally biased toward low complexity: residues 94–110, 133–147, and 629–638; these read STGTATSLDTAASLTST, ASWSESGVSSSSGDG, and DPADTSSSDS. Residues 153 to 763 are a coiled coil; that stretch reads EVDKRLHQLK…PEEKQVIMRL (611 aa). A GRIP domain is found at 713–763; the sequence is QSREGANLEYLKNIIYRFLTLPDSLGRQQTLTAILTILHFSPEEKQVIMRL.

It localises to the cytoplasm. It is found in the golgi apparatus membrane. Its function is as follows. Probably involved in maintaining Golgi structure. The polypeptide is GRIP and coiled-coil domain-containing protein 1 (GCC1) (Homo sapiens (Human)).